The sequence spans 1603 residues: Vitellogenin-5 (1603 aa).

An N-terminal signal peptide occupies residues methionine 1–alanine 15. The Vitellogenin domain occupies phenylalanine 24–valine 685. Residues alanine 1306 to glutamate 1475 form the VWFD domain. 2 disulfides stabilise this stretch: cysteine 1308-cysteine 1438 and cysteine 1330-cysteine 1474. The interval asparagine 1492 to lysine 1513 is disordered.

In terms of processing, vitellogenin 5 undergoes little if any processing before being packaged into yolk platelets. As to expression, expressed in the intestine of adult hermaphrodites.

The protein localises to the secreted. Its function is as follows. Precursor of the egg-yolk proteins that are sources of nutrients during embryonic development. Together with other vitellogenins, may play a role in modulating life-span, acting via induction of autophagy and lysosomal lipolysis. In Caenorhabditis elegans, this protein is Vitellogenin-5 (vit-5).